A 67-amino-acid polypeptide reads, in one-letter code: Conotoxin Cp1.1 (67 aa).

Positions 1–26 (MMFRLTSVSCFLLVIACLNLFQVVLT) are cleaved as a signal peptide. 4 disulfide bridges follow: C29-C43, C36-C48, C42-C52, and C47-C56. Residue Y60 is modified to Tyrosine amide. Positions 64–67 (ATFQ) are excised as a propeptide.

It belongs to the conotoxin I2 superfamily. As to expression, expressed by the venom duct.

It is found in the secreted. The sequence is that of Conotoxin Cp1.1 from Conus capitaneus (Captain cone).